The following is a 235-amino-acid chain: (5-formylfuran-3-yl)methyl phosphate synthase (235 aa).

The active-site Schiff-base intermediate with substrate is the lysine 27. The active-site Proton acceptor is the lysine 86.

Belongs to the MfnB family.

The catalysed reaction is 2 D-glyceraldehyde 3-phosphate = 4-(hydroxymethyl)-2-furancarboxaldehyde phosphate + phosphate + 2 H2O. Its pathway is cofactor biosynthesis; methanofuran biosynthesis. In terms of biological role, catalyzes the formation of 4-(hydroxymethyl)-2-furancarboxaldehyde phosphate (4-HFC-P) from two molecules of glyceraldehyde-3-P (GA-3-P). This is (5-formylfuran-3-yl)methyl phosphate synthase from Archaeoglobus fulgidus (strain ATCC 49558 / DSM 4304 / JCM 9628 / NBRC 100126 / VC-16).